Reading from the N-terminus, the 120-residue chain is NAD(P)H-quinone oxidoreductase subunit 3, chloroplastic (120 aa).

3 helical membrane-spanning segments follow: residues 9 to 29 (IFWAFLIISSVIPILAFXISG), 64 to 84 (MFALVFVVFDVETVFLYPWAM), and 88 to 108 (VLGVSVFIEALIFVLILIVGL).

The protein belongs to the complex I subunit 3 family. As to quaternary structure, NDH is composed of at least 16 different subunits, 5 of which are encoded in the nucleus.

The protein resides in the plastid. The protein localises to the chloroplast thylakoid membrane. The enzyme catalyses a plastoquinone + NADH + (n+1) H(+)(in) = a plastoquinol + NAD(+) + n H(+)(out). It catalyses the reaction a plastoquinone + NADPH + (n+1) H(+)(in) = a plastoquinol + NADP(+) + n H(+)(out). In terms of biological role, NDH shuttles electrons from NAD(P)H:plastoquinone, via FMN and iron-sulfur (Fe-S) centers, to quinones in the photosynthetic chain and possibly in a chloroplast respiratory chain. The immediate electron acceptor for the enzyme in this species is believed to be plastoquinone. Couples the redox reaction to proton translocation, and thus conserves the redox energy in a proton gradient. This chain is NAD(P)H-quinone oxidoreductase subunit 3, chloroplastic, found in Eucalyptus globulus subsp. globulus (Tasmanian blue gum).